A 252-amino-acid polypeptide reads, in one-letter code: Probable phosphatase Shewmr4_2619 (252 aa).

Residues His8, His10, His16, His41, Glu74, His102, His132, Asp193, and His195 each coordinate Zn(2+).

This sequence belongs to the PHP family. The cofactor is Zn(2+).

This Shewanella sp. (strain MR-4) protein is Probable phosphatase Shewmr4_2619.